The sequence spans 370 residues: MSMNSFGHLFRVTTWGESHGPALGATVDGCPPNVAVSEEMLQHWLDKRRPGQNKNTTQRNEPDAVRILSGVFEGKSTGTPIQLMIENTDQRSRDYGEIAQTFRPGHADITYFQKYGNRDYRGGGRSSARETAARVAAGGVAREALKSLAPGIEIKGYMTRMGEMEIDRARFDWSAIDQNDFWIPDAAAVQDWEDYLQALRKQHDSVGAVVEVVARGVPAGIGAPIYGKLDTDLAAAMMSINAVKAVEIGEGMNAALLKGSENADEIFMGNDGAPVYSSNHAGGILGGISTGQDVVIRFAVKPTSSILTPRQSIRKDGTAAEVITKGRHDPCVGIRAVPVAEAMMAFVILDHILLHRGQIGENQGVIGAPD.

Arg-48 contributes to the NADP(+) binding site. FMN-binding positions include 125 to 127 (RSS), 241 to 242 (NA), Gly-286, 301 to 305 (KPTSS), and Arg-327.

The protein belongs to the chorismate synthase family. As to quaternary structure, homotetramer. Requires FMNH2 as cofactor.

The enzyme catalyses 5-O-(1-carboxyvinyl)-3-phosphoshikimate = chorismate + phosphate. It participates in metabolic intermediate biosynthesis; chorismate biosynthesis; chorismate from D-erythrose 4-phosphate and phosphoenolpyruvate: step 7/7. Functionally, catalyzes the anti-1,4-elimination of the C-3 phosphate and the C-6 proR hydrogen from 5-enolpyruvylshikimate-3-phosphate (EPSP) to yield chorismate, which is the branch point compound that serves as the starting substrate for the three terminal pathways of aromatic amino acid biosynthesis. This reaction introduces a second double bond into the aromatic ring system. This Ruegeria sp. (strain TM1040) (Silicibacter sp.) protein is Chorismate synthase.